Reading from the N-terminus, the 256-residue chain is MLVAVDIGNTNIVLGFLDGDAIAGTYRITTKANHTSDEYGLFLTEFLRMSGFQPSDVDDVIICSVVPKVMHSFRSSIVKFLDIDPMVVGPGIKTGMNVRVDDPKSLGADILADCAGAYYEYGGPVLVADFGTATTFTHVSDKGVVDSGVITTGIRAGAAALWGDTAQLPEVEITRPDTILGTNTKTCMQAGLYYTFLGGVERTIRQFRRELGGEDFKVITTGGLGRVFENDTELIDVYDPDLIFKGMAHIYSRNVK.

6 to 13 (DIGNTNIV) is a binding site for ATP. 107–110 (GADI) contributes to the substrate binding site. The Proton acceptor role is filled by D109. D129 is a K(+) binding site. Residue T132 participates in ATP binding. Residue T184 participates in substrate binding.

It belongs to the type III pantothenate kinase family. In terms of assembly, homodimer. NH4(+) is required as a cofactor. Requires K(+) as cofactor.

The protein localises to the cytoplasm. The enzyme catalyses (R)-pantothenate + ATP = (R)-4'-phosphopantothenate + ADP + H(+). The protein operates within cofactor biosynthesis; coenzyme A biosynthesis; CoA from (R)-pantothenate: step 1/5. In terms of biological role, catalyzes the phosphorylation of pantothenate (Pan), the first step in CoA biosynthesis. This chain is Type III pantothenate kinase, found in Bifidobacterium longum (strain DJO10A).